Consider the following 83-residue polypeptide: Alpha-neurotoxin NTX-4 (83 aa).

Residues 1-21 form the signal peptide; that stretch reads MKTLLLTLLVVTIVCLDLGYT. Cystine bridges form between Cys24/Cys45, Cys38/Cys62, Cys64/Cys75, and Cys76/Cys81.

It belongs to the three-finger toxin family. Short-chain subfamily. Type I alpha-neurotoxin sub-subfamily. As to expression, expressed by the venom gland.

The protein localises to the secreted. Functionally, binds to muscle nicotinic acetylcholine receptor (nAChR) and inhibit acetylcholine from binding to the receptor, thereby impairing neuromuscular transmission. The protein is Alpha-neurotoxin NTX-4 of Naja sputatrix (Malayan spitting cobra).